The primary structure comprises 407 residues: Cation efflux system protein CusB (407 aa).

The signal sequence occupies residues 1-28 (MKKIALIIGSMIAGGIISAAGFTWFAKA).

This sequence belongs to the membrane fusion protein (MFP) (TC 8.A.1) family. As to quaternary structure, the cus efflux system is composed of CusA, CusB, CusC and CusF.

In terms of biological role, part of a cation efflux system that mediates resistance to copper and silver. The chain is Cation efflux system protein CusB (cusB) from Escherichia coli O157:H7.